Reading from the N-terminus, the 171-residue chain is uncharacterized protein (171 aa).

Residues 30–97 (AGRVSAAYHA…PKKGIIICAL (68 aa)) form the HTH gntR-type domain. The H-T-H motif DNA-binding region spans 57–76 (EIEIARQLGMSRTPVHEAMA).

This is an uncharacterized protein from Agrobacterium vitis (Rhizobium vitis).